A 589-amino-acid chain; its full sequence is Putative adenine deaminase BC_3012 (589 aa).

The protein belongs to the metallo-dependent hydrolases superfamily. Adenine deaminase family.

The catalysed reaction is adenine + H2O + H(+) = hypoxanthine + NH4(+). The protein is Putative adenine deaminase BC_3012 of Bacillus cereus (strain ATCC 14579 / DSM 31 / CCUG 7414 / JCM 2152 / NBRC 15305 / NCIMB 9373 / NCTC 2599 / NRRL B-3711).